A 61-amino-acid chain; its full sequence is Small ribosomal subunit protein uS14 (61 aa).

Zn(2+)-binding residues include Cys24, Cys27, Cys40, and Cys43.

The protein belongs to the universal ribosomal protein uS14 family. Zinc-binding uS14 subfamily. As to quaternary structure, part of the 30S ribosomal subunit. Contacts proteins S3 and S10. The cofactor is Zn(2+).

In terms of biological role, binds 16S rRNA, required for the assembly of 30S particles and may also be responsible for determining the conformation of the 16S rRNA at the A site. The chain is Small ribosomal subunit protein uS14 from Mycobacterium leprae (strain Br4923).